A 448-amino-acid chain; its full sequence is Ribosomal protein uS12 methylthiotransferase RimO (448 aa).

In terms of domain architecture, MTTase N-terminal spans 7–123 (EKVSLVSLGC…IAEIIAEKEG (117 aa)). The [4Fe-4S] cluster site is built by cysteine 16, cysteine 52, cysteine 86, cysteine 161, cysteine 165, and cysteine 168. The region spanning 147–377 (SSPYYTAYLK…MRTQARVSFK (231 aa)) is the Radical SAM core domain. One can recognise a TRAM domain in the interval 380 to 448 (RSLVDTEELV…DYDLIGEIVP (69 aa)).

The protein belongs to the methylthiotransferase family. RimO subfamily. [4Fe-4S] cluster is required as a cofactor.

It localises to the cytoplasm. It catalyses the reaction L-aspartate(89)-[ribosomal protein uS12]-hydrogen + (sulfur carrier)-SH + AH2 + 2 S-adenosyl-L-methionine = 3-methylsulfanyl-L-aspartate(89)-[ribosomal protein uS12]-hydrogen + (sulfur carrier)-H + 5'-deoxyadenosine + L-methionine + A + S-adenosyl-L-homocysteine + 2 H(+). Catalyzes the methylthiolation of an aspartic acid residue of ribosomal protein uS12. The polypeptide is Ribosomal protein uS12 methylthiotransferase RimO (Geotalea uraniireducens (strain Rf4) (Geobacter uraniireducens)).